Reading from the N-terminus, the 429-residue chain is U3 small nucleolar RNA-associated protein 18 homolog (429 aa).

4 WD repeats span residues 117-156 (RYTR…KKDR), 295-336 (TDDG…NSTN), 345-386 (NLVT…TFKN), and 392-428 (GKVT…HFTD).

This sequence belongs to the WD repeat UTP18 family.

It is found in the nucleus. It localises to the nucleolus. Involved in nucleolar processing of pre-18S ribosomal RNA. The sequence is that of U3 small nucleolar RNA-associated protein 18 homolog from Caenorhabditis elegans.